The chain runs to 1061 residues: Carbamoyl phosphate synthase large chain (1061 aa).

Residues 1–401 (MPKRTDVHKI…ALQKAVRSLE (401 aa)) form a carboxyphosphate synthetic domain region. Positions 129, 169, 175, 176, 208, 210, 215, 241, 242, 243, 284, and 298 each coordinate ATP. Residues 133-327 (KDLMQELNEP…IAKLAAKIAV (195 aa)) form the ATP-grasp 1 domain. The Mg(2+) site is built by glutamine 284, glutamate 298, and asparagine 300. Mn(2+) contacts are provided by glutamine 284, glutamate 298, and asparagine 300. Residues 402–546 (IDEKDLISAK…YSSYDLENES (145 aa)) form an oligomerization domain region. Positions 547-929 (KKSDKKSVLV…ALYKAFTGAK (383 aa)) are carbamoyl phosphate synthetic domain. In terms of domain architecture, ATP-grasp 2 spans 671–861 (DQTIKNLGLK…MAQVATRVIL (191 aa)). 10 residues coordinate ATP: arginine 707, alanine 746, leucine 748, glutamate 752, glycine 777, valine 778, histidine 779, serine 780, glutamine 820, and glutamate 832. The Mg(2+) site is built by glutamine 820, glutamate 832, and asparagine 834. Residues glutamine 820, glutamate 832, and asparagine 834 each contribute to the Mn(2+) site. The MGS-like domain maps to 930–1061 (MELPDNGNVL…ENRSFATNSL (132 aa)). Positions 930–1061 (MELPDNGNVL…ENRSFATNSL (132 aa)) are allosteric domain.

This sequence belongs to the CarB family. As to quaternary structure, composed of two chains; the small (or glutamine) chain promotes the hydrolysis of glutamine to ammonia, which is used by the large (or ammonia) chain to synthesize carbamoyl phosphate. Tetramer of heterodimers (alpha,beta)4. It depends on Mg(2+) as a cofactor. Requires Mn(2+) as cofactor.

The enzyme catalyses hydrogencarbonate + L-glutamine + 2 ATP + H2O = carbamoyl phosphate + L-glutamate + 2 ADP + phosphate + 2 H(+). The catalysed reaction is hydrogencarbonate + NH4(+) + 2 ATP = carbamoyl phosphate + 2 ADP + phosphate + 2 H(+). It participates in amino-acid biosynthesis; L-arginine biosynthesis; carbamoyl phosphate from bicarbonate: step 1/1. Its pathway is pyrimidine metabolism; UMP biosynthesis via de novo pathway; (S)-dihydroorotate from bicarbonate: step 1/3. In terms of biological role, large subunit of the glutamine-dependent carbamoyl phosphate synthetase (CPSase). CPSase catalyzes the formation of carbamoyl phosphate from the ammonia moiety of glutamine, carbonate, and phosphate donated by ATP, constituting the first step of 2 biosynthetic pathways, one leading to arginine and/or urea and the other to pyrimidine nucleotides. The large subunit (synthetase) binds the substrates ammonia (free or transferred from glutamine from the small subunit), hydrogencarbonate and ATP and carries out an ATP-coupled ligase reaction, activating hydrogencarbonate by forming carboxy phosphate which reacts with ammonia to form carbamoyl phosphate. The protein is Carbamoyl phosphate synthase large chain of Ligilactobacillus salivarius (strain UCC118) (Lactobacillus salivarius).